The following is a 341-amino-acid chain: Ribosomal RNA small subunit methyltransferase C (341 aa).

Belongs to the methyltransferase superfamily. RsmC family. Monomer.

It localises to the cytoplasm. It catalyses the reaction guanosine(1207) in 16S rRNA + S-adenosyl-L-methionine = N(2)-methylguanosine(1207) in 16S rRNA + S-adenosyl-L-homocysteine + H(+). In terms of biological role, specifically methylates the guanine in position 1207 of 16S rRNA in the 30S particle. The chain is Ribosomal RNA small subunit methyltransferase C from Shewanella pealeana (strain ATCC 700345 / ANG-SQ1).